We begin with the raw amino-acid sequence, 902 residues long: Magnesium-transporting ATPase, P-type 1 (902 aa).

Over Met1–Trp98 the chain is Cytoplasmic. Residues Val99–Thr119 traverse the membrane as a helical segment. Glu120 is a topological domain (extracellular). The chain crosses the membrane as a helical span at residues Asp121–Val141. Residues Gln142–Arg291 are Cytoplasmic-facing. The helical transmembrane segment at Val292–Gly312 threads the bilayer. Over Tyr313 to Ala321 the chain is Extracellular. The helical transmembrane segment at Ala322–Met339 threads the bilayer. Glu335 serves as a coordination point for Mg(2+). Topologically, residues Ile340–Met699 are cytoplasmic. Asp377 serves as the catalytic 4-aspartylphosphate intermediate. The Mg(2+) site is built by Asp645, Asp649, and Asn713. The chain crosses the membrane as a helical span at residues Leu700–Val719. Residues Ala720–Pro728 are Extracellular-facing. Residues Met729–Ile748 traverse the membrane as a helical segment. 2 residues coordinate Mg(2+): Asn738 and Asp742. Residues Pro749–Gly770 lie on the Cytoplasmic side of the membrane. The chain crosses the membrane as a helical span at residues Arg771 to Val794. The Extracellular portion of the chain corresponds to Phe795–Gln803. Residues Thr804–Val822 form a helical membrane-spanning segment. The Cytoplasmic portion of the chain corresponds to His823–Ser835. A helical transmembrane segment spans residues Arg836–Leu855. Over Pro856 to Pro870 the chain is Extracellular. Residues Leu871–Leu890 traverse the membrane as a helical segment. The Cytoplasmic portion of the chain corresponds to Val891–Gln902.

This sequence belongs to the cation transport ATPase (P-type) (TC 3.A.3) family. Type IIIB subfamily.

The protein resides in the cell inner membrane. The catalysed reaction is Mg(2+)(out) + ATP + H2O = Mg(2+)(in) + ADP + phosphate + H(+). In terms of biological role, mediates magnesium influx to the cytosol. In Salmonella typhimurium (strain 14028s / SGSC 2262), this protein is Magnesium-transporting ATPase, P-type 1 (mgtA).